Reading from the N-terminus, the 430-residue chain is Cell division protein FtsZ (430 aa).

GTP-binding positions include 76–80, 163–165, glutamate 194, arginine 198, and aspartate 242; these read GGGCN and GTG. Residues 374–418 are disordered; the sequence is KEKPQAKTSSKPVLSGPPAGVETVPSTTTPEDPLGEIPMAPELDI.

It belongs to the FtsZ family. In terms of assembly, homodimer. Polymerizes to form a dynamic ring structure in a strictly GTP-dependent manner. Interacts directly with several other division proteins.

Its subcellular location is the cytoplasm. Functionally, essential cell division protein that forms a contractile ring structure (Z ring) at the future cell division site. The regulation of the ring assembly controls the timing and the location of cell division. One of the functions of the FtsZ ring is to recruit other cell division proteins to the septum to produce a new cell wall between the dividing cells. Binds GTP and shows GTPase activity. This Synechocystis sp. (strain ATCC 27184 / PCC 6803 / Kazusa) protein is Cell division protein FtsZ.